The following is a 338-amino-acid chain: Fructose-1,6-bisphosphatase class 1 1 (338 aa).

Mg(2+) contacts are provided by E88, D107, L109, and D110. Substrate-binding positions include 110–113 and N196; that span reads DGSS. E268 contributes to the Mg(2+) binding site.

This sequence belongs to the FBPase class 1 family. As to quaternary structure, homotetramer. The cofactor is Mg(2+).

The protein resides in the cytoplasm. The enzyme catalyses beta-D-fructose 1,6-bisphosphate + H2O = beta-D-fructose 6-phosphate + phosphate. The protein operates within carbohydrate biosynthesis; Calvin cycle. The polypeptide is Fructose-1,6-bisphosphatase class 1 1 (Bradyrhizobium sp. (strain BTAi1 / ATCC BAA-1182)).